A 506-amino-acid chain; its full sequence is Proline--tRNA ligase (506 aa).

This sequence belongs to the class-II aminoacyl-tRNA synthetase family. ProS type 3 subfamily. Homodimer.

Its subcellular location is the cytoplasm. The catalysed reaction is tRNA(Pro) + L-proline + ATP = L-prolyl-tRNA(Pro) + AMP + diphosphate. Catalyzes the attachment of proline to tRNA(Pro) in a two-step reaction: proline is first activated by ATP to form Pro-AMP and then transferred to the acceptor end of tRNA(Pro). The chain is Proline--tRNA ligase from Rhodopirellula baltica (strain DSM 10527 / NCIMB 13988 / SH1).